The chain runs to 876 residues: Probable inactive ATP-dependent zinc metalloprotease FTSHI 2, chloroplastic (876 aa).

Residues 1-20 form a disordered region; it reads MACRFPLHSSSPSQFLSPEN. A chloroplast-targeting transit peptide spans 1–32; it reads MACRFPLHSSSPSQFLSPENRQRLPRNYPSIS. Over residues 8-19 the composition is skewed to polar residues; sequence HSSSPSQFLSPE. Residues 59–79 form a helical membrane-spanning segment; it reads LLAIPITLTIISASLAKPSFA. Residues 256-276 form a disordered region; sequence TMKAQKKQQERKKRKAVRKKK. Residues 258–275 are compositionally biased toward basic residues; the sequence is KAQKKQQERKKRKAVRKK. A helical membrane pass occupies residues 304–324; sequence VATALGLVFFYIFYRVVVLNY. The tract at residues 350–370 is disordered; that stretch reads ELEREMEGIEEEDEEVEEGTG. Residues 357-368 are compositionally biased toward acidic residues; it reads GIEEEDEEVEEG. ATP is bound at residue 450–457; it reads GPPGVGKT.

The protein in the N-terminal section; belongs to the AAA ATPase family. This sequence in the C-terminal section; belongs to the peptidase M41 family. In terms of assembly, homooligomer. Interacts with FtsHi4.

It is found in the plastid. Its subcellular location is the chloroplast membrane. Functionally, required for plastid development during embryogenesis. Might be involved in chaperone functions or play a structural role in the thylakoid FtsH complex. The protein is Probable inactive ATP-dependent zinc metalloprotease FTSHI 2, chloroplastic of Arabidopsis thaliana (Mouse-ear cress).